We begin with the raw amino-acid sequence, 739 residues long: Phosphoribosylformylglycinamidine synthase subunit PurL (739 aa).

Residue histidine 54 is part of the active site. The ATP site is built by tyrosine 57 and lysine 96. Position 98 (glutamate 98) interacts with Mg(2+). Residues serine 99 to histidine 102 and arginine 121 each bind substrate. The active-site Proton acceptor is histidine 100. Aspartate 122 serves as a coordination point for Mg(2+). Substrate is bound at residue glutamine 245. A Mg(2+)-binding site is contributed by aspartate 273. Glutamate 317–glutamine 319 is a binding site for substrate. ATP-binding residues include aspartate 500 and glycine 537. Asparagine 538 contributes to the Mg(2+) binding site. Residue serine 540 participates in substrate binding.

The protein belongs to the FGAMS family. Monomer. Part of the FGAM synthase complex composed of 1 PurL, 1 PurQ and 2 PurS subunits.

It is found in the cytoplasm. It catalyses the reaction N(2)-formyl-N(1)-(5-phospho-beta-D-ribosyl)glycinamide + L-glutamine + ATP + H2O = 2-formamido-N(1)-(5-O-phospho-beta-D-ribosyl)acetamidine + L-glutamate + ADP + phosphate + H(+). Its pathway is purine metabolism; IMP biosynthesis via de novo pathway; 5-amino-1-(5-phospho-D-ribosyl)imidazole from N(2)-formyl-N(1)-(5-phospho-D-ribosyl)glycinamide: step 1/2. Part of the phosphoribosylformylglycinamidine synthase complex involved in the purines biosynthetic pathway. Catalyzes the ATP-dependent conversion of formylglycinamide ribonucleotide (FGAR) and glutamine to yield formylglycinamidine ribonucleotide (FGAM) and glutamate. The FGAM synthase complex is composed of three subunits. PurQ produces an ammonia molecule by converting glutamine to glutamate. PurL transfers the ammonia molecule to FGAR to form FGAM in an ATP-dependent manner. PurS interacts with PurQ and PurL and is thought to assist in the transfer of the ammonia molecule from PurQ to PurL. The polypeptide is Phosphoribosylformylglycinamidine synthase subunit PurL (Bacillus anthracis (strain A0248)).